The primary structure comprises 354 residues: Alternative oxidase, mitochondrial (354 aa).

The transit peptide at 1-64 (MNSMSTTGPI…RFISSTPQSQ (64 aa)) directs the protein to the mitochondrion. Residues 153–173 (FVFLESVAGVPGMVGGMLRHL) form a helical membrane-spanning segment. The Fe cation site is built by Glu157, Glu196, and His199. The chain crosses the membrane as a helical span at residues 215 to 235 (LMVLGAQGVFFNGFFLSYLIS). Residues Glu247, Glu302, and His305 each contribute to the Fe cation site. Residues 333–354 (KPHPGKGIKHLKTTGWEREEVV) form a disordered region. Positions 335-344 (HPGKGIKHLK) are enriched in basic residues.

Belongs to the alternative oxidase family. It depends on Fe cation as a cofactor.

It is found in the mitochondrion inner membrane. Its function is as follows. Catalyzes cyanide-resistant oxygen consumption. May increase respiration when the cytochrome respiratory pathway is restricted, or in response to low temperatures. The protein is Alternative oxidase, mitochondrial (alxA) of Emericella nidulans (strain FGSC A4 / ATCC 38163 / CBS 112.46 / NRRL 194 / M139) (Aspergillus nidulans).